We begin with the raw amino-acid sequence, 207 residues long: 3-isopropylmalate dehydratase small subunit (207 aa).

The protein belongs to the LeuD family. LeuD type 1 subfamily. In terms of assembly, heterodimer of LeuC and LeuD.

The enzyme catalyses (2R,3S)-3-isopropylmalate = (2S)-2-isopropylmalate. It participates in amino-acid biosynthesis; L-leucine biosynthesis; L-leucine from 3-methyl-2-oxobutanoate: step 2/4. Catalyzes the isomerization between 2-isopropylmalate and 3-isopropylmalate, via the formation of 2-isopropylmaleate. The sequence is that of 3-isopropylmalate dehydratase small subunit from Acidithiobacillus ferrooxidans (strain ATCC 23270 / DSM 14882 / CIP 104768 / NCIMB 8455) (Ferrobacillus ferrooxidans (strain ATCC 23270)).